Here is a 260-residue protein sequence, read N- to C-terminus: Segregation and condensation protein A (260 aa).

It belongs to the ScpA family. Component of a cohesin-like complex composed of ScpA, ScpB and the Smc homodimer, in which ScpA and ScpB bind to the head domain of Smc. The presence of the three proteins is required for the association of the complex with DNA.

The protein localises to the cytoplasm. In terms of biological role, participates in chromosomal partition during cell division. May act via the formation of a condensin-like complex containing Smc and ScpB that pull DNA away from mid-cell into both cell halves. This is Segregation and condensation protein A from Halalkalibacterium halodurans (strain ATCC BAA-125 / DSM 18197 / FERM 7344 / JCM 9153 / C-125) (Bacillus halodurans).